The chain runs to 1021 residues: Inversin (1021 aa).

ANK repeat units follow at residues 7–36 (QNPS…LRDS), 40–69 (FGRT…GINK), 73–102 (SQRT…DWRL), 106–137 (EEMT…EVDT), 141–170 (NKQT…NIGI), 174–206 (EGKI…TESL), 213–243 (EGRT…SVTA), 247–276 (LFRT…SGMI), 281–310 (QGAT…VRDE), 314–343 (EGRT…DIDI), 349–378 (YGGT…MVDP), 382–411 (MKHT…RVDL), 415–444 (DGHS…SPNL), 448–477 (AGRT…DPNI), 481–510 (EGRT…FPNH), and 516–546 (ERYT…SIAA). Positions 483 to 491 (RTALHWSCN) match the D-box 1 motif. Positions 548–577 (QDIAASSIQALYKGYKVRRAFRERKKLLMR) constitute an IQ 1 domain. 2 stretches are compositionally biased toward basic and acidic residues: residues 579–598 (EQLR…REAE) and 653–669 (SRRE…REPE). Disordered stretches follow at residues 579 to 602 (EQLR…QQLS), 632 to 691 (KDSV…KKCP), and 704 to 868 (GPDT…GTCS). Over residues 722–731 (PAGSSRPGSA) the composition is skewed to low complexity. Composition is skewed to polar residues over residues 759–781 (GAHS…TSKG) and 791–802 (TGSQPSNNTSVT). Residues 803-866 (RQKEKRQEKE…KEKEKKKDGT (64 aa)) are compositionally biased toward basic and acidic residues. Positions 862-870 (KKDGTCSKN) match the D-box 2 motif. In terms of domain architecture, IQ 2 spans 869–898 (KNQAAVVIQRAWRRSCVRGRIRKVLCRSLK).

In terms of assembly, binds calmodulin via its IQ domains.

It is found in the cytoplasm. The protein resides in the cytoskeleton. Its function is as follows. Required for normal renal development and establishment of left-right axis. Probably acts as a molecular switch between different Wnt signaling pathways. Inhibits the canonical Wnt pathway by targeting cytoplasmic disheveled for degradation by the ubiquitin-proteasome. This suggests that it is required in renal development to oppose the repression of terminal differentiation of tubular epithelial cells by Wnt signaling. In Danio rerio (Zebrafish), this protein is Inversin (invs).